The chain runs to 203 residues: Imidazoleglycerol-phosphate dehydratase (203 aa).

The tract at residues 184–203 (DPRRSSQIPSSKGVLEQAGQ) is disordered.

This sequence belongs to the imidazoleglycerol-phosphate dehydratase family.

The protein localises to the cytoplasm. The catalysed reaction is D-erythro-1-(imidazol-4-yl)glycerol 3-phosphate = 3-(imidazol-4-yl)-2-oxopropyl phosphate + H2O. Its pathway is amino-acid biosynthesis; L-histidine biosynthesis; L-histidine from 5-phospho-alpha-D-ribose 1-diphosphate: step 6/9. The sequence is that of Imidazoleglycerol-phosphate dehydratase from Prochlorococcus marinus (strain NATL1A).